The following is an 88-amino-acid chain: Small ribosomal subunit protein uS17 (88 aa).

It belongs to the universal ribosomal protein uS17 family. In terms of assembly, part of the 30S ribosomal subunit.

Functionally, one of the primary rRNA binding proteins, it binds specifically to the 5'-end of 16S ribosomal RNA. In Lactobacillus delbrueckii subsp. bulgaricus (strain ATCC 11842 / DSM 20081 / BCRC 10696 / JCM 1002 / NBRC 13953 / NCIMB 11778 / NCTC 12712 / WDCM 00102 / Lb 14), this protein is Small ribosomal subunit protein uS17.